The chain runs to 512 residues: Flavonoid 3'-monooxygenase (512 aa).

The helical transmembrane segment at 1 to 21 (MEILSLILYTVIFSFLLQFIL) threads the bilayer. At 22-512 (RSFFRKRYPL…PRLEAQAYIG (491 aa)) the chain is on the cytoplasmic side. Residue Cys447 participates in heme binding.

This sequence belongs to the cytochrome P450 family. Heme is required as a cofactor. In terms of tissue distribution, high expression in petals and ovaries and to a lower extent in sepals, pedicels, anthers and stems. Not detected in leaves, style or roots.

It is found in the endoplasmic reticulum membrane. The enzyme catalyses a 3'-unsubstituted flavone + reduced [NADPH--hemoprotein reductase] + O2 = a 3'-hydroxyflavone + oxidized [NADPH--hemoprotein reductase] + H2O + H(+). The protein operates within secondary metabolite biosynthesis; flavonoid biosynthesis. Functionally, catalyzes the 3'-hydroxylation of the flavonoid B-ring to the 3',4'-hydroxylated state. Convert naringenin to eriodictyol and dihydrokaempferol to dihydroquercetin. This chain is Flavonoid 3'-monooxygenase (CYP75B2), found in Petunia hybrida (Petunia).